Here is a 224-residue protein sequence, read N- to C-terminus: Retinoschisin (224 aa).

An N-terminal signal peptide occupies residues 1–23 (MPHKIEGFFLLLLFGYEATLGLS). Residues 63–219 (CPYHKPLGFE…IAIRMELLEC (157 aa)) form the F5/8 type C domain. 2 cysteine pairs are disulfide-bonded: cysteine 63-cysteine 219 and cysteine 110-cysteine 142.

Homooctamer of 4 homodimers; disulfide-linked. The homooctamer has a flat, cogwheel structure with a diameter of about 14 nm. Two stacked octamers can assemble to form a hexadecamer. As to expression, detected in the eye cup. Detected in retina, in the inner segment of the photoreceptors, the inner nuclear layer, the inner plexiform layer and the ganglion cell layer (at protein level). Restricted to the retina. At the mRNA level, detected only within the photoreceptor cell layer, most prominently within the inner segments of the photoreceptors. Undetectable in the inner plexiform layers and the inner nuclear layer.

The protein resides in the secreted. Its subcellular location is the cell membrane. In terms of biological role, binds negatively charged membrane lipids, such as phosphatidylserine and phosphoinositides. May play a role in cell-cell adhesion processes in the retina, via homomeric interaction between octamers present on the surface of two neighboring cells. Required for normal structure and function of the retina. This is Retinoschisin (Rs1) from Mus musculus (Mouse).